Here is a 1338-residue protein sequence, read N- to C-terminus: P-type sodium-transporting ATPase4 (1338 aa).

Positions 1-106 are disordered; the sequence is MAARASADKL…KSISSVSQMH (106 aa). Over residues 55–69 the composition is skewed to basic and acidic residues; it reads AEEKVAGHDGESPRR. Over residues 91–104 the composition is skewed to polar residues; sequence GHSQLGKSISSVSQ. 8 consecutive transmembrane segments (helical) span residues 229 to 249, 255 to 275, 418 to 438, 456 to 476, 985 to 1005, 1068 to 1088, 1261 to 1281, and 1288 to 1308; these read IFIQQFLSPVVLLLLVAAIAS, WVEGAAIFIIVTLNASLATYM, LGGMIGLIAICVLIIVVVVAI, IVLVAVGFAVSSIPEGLPMVV, FVCFLLGTNIGEIIYLTIAIA, IFEAGCVLMSLALGLYLCTGV, MHLACSISATLTSLLTIVPGI, and CALPWYLYLFAIGCGFVNLIL.

This sequence belongs to the cation transport ATPase (P-type) (TC 3.A.3) family.

The protein resides in the cell membrane. It carries out the reaction Na(+)(in) + ATP + H2O = Na(+)(out) + ADP + phosphate + H(+). Its activity is regulated as follows. Inhibited by cipargamin, a synthetic spiroindolone. Inhibited by pyrazoleamide PA21A050, structurally unrelated to the spiroindolones. Inhibited by (+)-SJ733, a dihydroisoquinolone compound. In terms of biological role, sodium-exporting ATPase. Required for the extrusion of Na(+) from the parasites to maintain a low cytosolic concentration of Na(+). Required for maintaining the viability of extracellular parasites but not for intracellular growth, egress or invasion. Involved in parasite virulence. The protein is P-type sodium-transporting ATPase4 of Toxoplasma gondii (strain ATCC 50861 / VEG).